Reading from the N-terminus, the 321-residue chain is L-carnitine dehydrogenase (321 aa).

Residue 14–19 (GSGVIG) participates in NAD(+) binding.

It belongs to the 3-hydroxyacyl-CoA dehydrogenase family. L-carnitine dehydrogenase subfamily. Homodimer.

It is found in the cytoplasm. It carries out the reaction carnitine + NAD(+) = 3-dehydrocarnitine + NADH + H(+). It functions in the pathway amine and polyamine metabolism; carnitine metabolism. Analogs of L-carnitine such as D-carnitine, glycine betaine and choline, are competitive inhibitors of L-carnitine oxidation. Catalyzes the NAD(+)-dependent oxidation of L-carnitine to 3-dehydrocarnitine. Is specific for L-carnitine and NAD(+) as substrates. D,L-3-hydroxybutyrate, L-lactate, ethanol, L-malate and D,L-isocitrate are not substrates. Is involved in a L-carnitine degradation pathway that allows P.aeruginosa to grow on L-carnitine as the sole source of carbon and nitrogen. This Pseudomonas aeruginosa (strain ATCC 15692 / DSM 22644 / CIP 104116 / JCM 14847 / LMG 12228 / 1C / PRS 101 / PAO1) protein is L-carnitine dehydrogenase.